Here is a 381-residue protein sequence, read N- to C-terminus: Phospholipid scramblase family protein C343.06c (381 aa).

The tract at residues 336 to 369 (QEILKNDQETTPSTNDSSSETKSPFLSDADLDQQ) is disordered. The segment covering 344–359 (ETTPSTNDSSSETKSP) has biased composition (polar residues).

The protein belongs to the phospholipid scramblase family.

It is found in the mitochondrion. The sequence is that of Phospholipid scramblase family protein C343.06c from Schizosaccharomyces pombe (strain 972 / ATCC 24843) (Fission yeast).